We begin with the raw amino-acid sequence, 189 residues long: Inner membrane-spanning protein YciB (189 aa).

5 helical membrane-spanning segments follow: residues 4–24, 53–73, 76–96, 121–141, and 149–169; these read FFEF…DIYI, ITFG…DDVF, WKVT…QFFY, MAWA…AFSL, and FKVF…GLYI.

The protein belongs to the YciB family.

Its subcellular location is the cell inner membrane. Plays a role in cell envelope biogenesis, maintenance of cell envelope integrity and membrane homeostasis. The sequence is that of Inner membrane-spanning protein YciB from Psychromonas ingrahamii (strain DSM 17664 / CCUG 51855 / 37).